The sequence spans 122 residues: Large ribosomal subunit protein uL14 (122 aa).

The protein belongs to the universal ribosomal protein uL14 family. As to quaternary structure, part of the 50S ribosomal subunit. Forms a cluster with proteins L3 and L19. In the 70S ribosome, L14 and L19 interact and together make contacts with the 16S rRNA in bridges B5 and B8.

Functionally, binds to 23S rRNA. Forms part of two intersubunit bridges in the 70S ribosome. The polypeptide is Large ribosomal subunit protein uL14 (Pseudoalteromonas translucida (strain TAC 125)).